Consider the following 555-residue polypeptide: CTL-like protein DDB_G0274487 (555 aa).

Residues 1 to 17 (MGIEDNSQQPNTGSPYG) show a composition bias toward polar residues. Positions 1–101 (MGIEDNSQQP…NLNKANDRES (101 aa)) are disordered. Positions 19-63 (SPPSQYNPYGQQPPQQQQYNPYGEQQQQPQQQQQYGYQPQFQPTY) are enriched in low complexity. Over residues 79 to 90 (PFPPQQQQPPPI) the composition is skewed to pro residues. The N-linked (GlcNAc...) asparagine glycan is linked to asparagine 116. Residues 138-158 (IWFSILFGLNFGLLIVVSASA) traverse the membrane as a helical segment. An N-linked (GlcNAc...) asparagine glycan is attached at asparagine 174. The next 10 membrane-spanning stretches (helical) occupy residues 182-202 (FLFAILPFTIVFSLLYIWAWL), 210-230 (ESLIKYSFFGAMGLMIGYCVF), 231-251 (FFVWGAIYLGIIFAIMAFFII), 284-304 (AGYVSIFINFVWFIVWGSAFA), 313-333 (AIQTCINIYLVFTLYWVFHVI), 340-360 (TVSGLLATWYFCSGPNGVGMP), 372-392 (LTTSFGSICFGSLIISLIETL), 405-425 (VVVKIIGYIFNCILSMLSSIV), 472-492 (IAIGGLVASLLLSILGALISI), and 493-513 (PFDMSVYGGALALFIGYLVII).

Belongs to the CTL (choline transporter-like) family.

It is found in the membrane. The protein is CTL-like protein DDB_G0274487 of Dictyostelium discoideum (Social amoeba).